Here is a 171-residue protein sequence, read N- to C-terminus: S-ribosylhomocysteine lyase (171 aa).

Histidine 54, histidine 58, and cysteine 128 together coordinate Fe cation.

Belongs to the LuxS family. As to quaternary structure, homodimer. It depends on Fe cation as a cofactor.

The enzyme catalyses S-(5-deoxy-D-ribos-5-yl)-L-homocysteine = (S)-4,5-dihydroxypentane-2,3-dione + L-homocysteine. Its function is as follows. Involved in the synthesis of autoinducer 2 (AI-2) which is secreted by bacteria and is used to communicate both the cell density and the metabolic potential of the environment. The regulation of gene expression in response to changes in cell density is called quorum sensing. Catalyzes the transformation of S-ribosylhomocysteine (RHC) to homocysteine (HC) and 4,5-dihydroxy-2,3-pentadione (DPD). This chain is S-ribosylhomocysteine lyase, found in Aliarcobacter butzleri (strain RM4018) (Arcobacter butzleri).